The sequence spans 339 residues: Tetraacyldisaccharide 4'-kinase (339 aa).

Position 44 to 51 (44 to 51 (TVGGTGKT)) interacts with ATP.

The protein belongs to the LpxK family.

The enzyme catalyses a lipid A disaccharide + ATP = a lipid IVA + ADP + H(+). The protein operates within glycolipid biosynthesis; lipid IV(A) biosynthesis; lipid IV(A) from (3R)-3-hydroxytetradecanoyl-[acyl-carrier-protein] and UDP-N-acetyl-alpha-D-glucosamine: step 6/6. Transfers the gamma-phosphate of ATP to the 4'-position of a tetraacyldisaccharide 1-phosphate intermediate (termed DS-1-P) to form tetraacyldisaccharide 1,4'-bis-phosphate (lipid IVA). The chain is Tetraacyldisaccharide 4'-kinase from Bdellovibrio bacteriovorus (strain ATCC 15356 / DSM 50701 / NCIMB 9529 / HD100).